A 438-amino-acid polypeptide reads, in one-letter code: Transmembrane protein 184C (438 aa).

7 helical membrane passes run 17 to 37 (LVAV…VWEL), 48 to 68 (AWFI…WVIL), 86 to 106 (ILWM…YPGI), 179 to 199 (YTVV…LGIY), 212 to 232 (YLVI…LLFY), 254 to 274 (VVFV…VGVI), and 287 to 307 (AVAT…AAIA). A disordered region spans residues 358 to 438 (PRKKLFPEDQ…KEPSDKSVDS (81 aa)). 2 stretches are compositionally biased toward low complexity: residues 374–390 (SLLS…ASSM) and 404–413 (TVTPQTTPTT). Phosphoserine is present on serine 422. Over residues 425 to 438 (IGEKKEPSDKSVDS) the composition is skewed to basic and acidic residues.

It belongs to the TMEM184 family.

Its subcellular location is the membrane. Possible tumor suppressor which may play a role in cell growth. The chain is Transmembrane protein 184C (TMEM184C) from Pongo abelii (Sumatran orangutan).